Here is a 234-residue protein sequence, read N- to C-terminus: Peptidyl-tRNA hydrolase (234 aa).

Residue tyrosine 14 coordinates tRNA. Histidine 19 acts as the Proton acceptor in catalysis. The tRNA site is built by phenylalanine 64, asparagine 66, and asparagine 112. The tract at residues 187–234 is disordered; that stretch reads TGTKADEEKPKPAKSHIHQARNGVQPKKLPETGPMAEMLKKMFGPKKD.

The protein belongs to the PTH family. Monomer.

The protein localises to the cytoplasm. The catalysed reaction is an N-acyl-L-alpha-aminoacyl-tRNA + H2O = an N-acyl-L-amino acid + a tRNA + H(+). Hydrolyzes ribosome-free peptidyl-tRNAs (with 1 or more amino acids incorporated), which drop off the ribosome during protein synthesis, or as a result of ribosome stalling. Its function is as follows. Catalyzes the release of premature peptidyl moieties from peptidyl-tRNA molecules trapped in stalled 50S ribosomal subunits, and thus maintains levels of free tRNAs and 50S ribosomes. This chain is Peptidyl-tRNA hydrolase, found in Allorhizobium ampelinum (strain ATCC BAA-846 / DSM 112012 / S4) (Agrobacterium vitis (strain S4)).